Consider the following 206-residue polypeptide: LexA repressor (206 aa).

The segment at residues 28-48 (VREIGEAVGLASSSTVHGHLA) is a DNA-binding region (H-T-H motif). Active-site for autocatalytic cleavage activity residues include Ser-128 and Lys-166.

The protein belongs to the peptidase S24 family. In terms of assembly, homodimer.

The catalysed reaction is Hydrolysis of Ala-|-Gly bond in repressor LexA.. Functionally, represses a number of genes involved in the response to DNA damage (SOS response), including recA and lexA. In the presence of single-stranded DNA, RecA interacts with LexA causing an autocatalytic cleavage which disrupts the DNA-binding part of LexA, leading to derepression of the SOS regulon and eventually DNA repair. The polypeptide is LexA repressor (Bacillus velezensis (strain DSM 23117 / BGSC 10A6 / LMG 26770 / FZB42) (Bacillus amyloliquefaciens subsp. plantarum)).